An 824-amino-acid chain; its full sequence is A-adding tRNA nucleotidyltransferase (824 aa).

CBS domains follow at residues 305–363 (MNTP…DEPI) and 367–423 (VNRD…LEKL). 459 to 462 (GVVR) is an ATP binding site. Mg(2+)-binding residues include D472 and D474. ATP is bound by residues 545-546 (RD), N550, 590-599 (DPVRILRALR), R603, and R632.

This sequence belongs to the tRNA nucleotidyltransferase/poly(A) polymerase family. Mg(2+) is required as a cofactor.

It catalyses the reaction a tRNA with a 3' CC end + ATP = a tRNA with a 3' CCA end + diphosphate. In terms of biological role, tRNA nucleotidyltransferase involved in the synthesis of the tRNA CCA terminus. Adds the terminal adenosine residue to tRNA. Can incorporate CMP into tRNA ending with C74C75 (tRNACC), with very weak efficiency. This is A-adding tRNA nucleotidyltransferase from Aquifex aeolicus (strain VF5).